Reading from the N-terminus, the 57-residue chain is Kunitz-type serine protease inhibitor homolog delta-dendrotoxin (57 aa).

Residues 5–55 (CKLPVRYGPCKKKIPSFYYKWKAKQCLPFDYSGCGGNANRFKTIEECRRTC) form the BPTI/Kunitz inhibitor domain. Disulfide bonds link C5–C55, C14–C38, and C30–C51.

The protein belongs to the venom Kunitz-type family. In terms of tissue distribution, expressed by the venom gland.

It is found in the secreted. In terms of biological role, serine protease inhibitor homolog that blocks voltage-gated potassium channels (Kv). The chain is Kunitz-type serine protease inhibitor homolog delta-dendrotoxin from Dendroaspis angusticeps (Eastern green mamba).